The following is a 235-amino-acid chain: Uridylate kinase (235 aa).

8 to 11 (KFSG) provides a ligand contact to ATP. Positions 16-21 (GKEGYG) are involved in allosteric activation by GTP. Residue G50 participates in UMP binding. ATP-binding residues include G51 and R55. UMP-binding positions include D71 and 132–139 (TGNPYFTT). 3 residues coordinate ATP: T159, Y165, and D168.

Belongs to the UMP kinase family. In terms of assembly, homohexamer.

The protein resides in the cytoplasm. The catalysed reaction is UMP + ATP = UDP + ADP. It participates in pyrimidine metabolism; CTP biosynthesis via de novo pathway; UDP from UMP (UMPK route): step 1/1. Its activity is regulated as follows. Allosterically activated by GTP. Inhibited by UTP. Catalyzes the reversible phosphorylation of UMP to UDP. In Sulfurovum sp. (strain NBC37-1), this protein is Uridylate kinase.